Consider the following 410-residue polypeptide: Gamma-glutamyl phosphate reductase (410 aa).

The protein belongs to the gamma-glutamyl phosphate reductase family.

The protein resides in the cytoplasm. The enzyme catalyses L-glutamate 5-semialdehyde + phosphate + NADP(+) = L-glutamyl 5-phosphate + NADPH + H(+). The protein operates within amino-acid biosynthesis; L-proline biosynthesis; L-glutamate 5-semialdehyde from L-glutamate: step 2/2. In terms of biological role, catalyzes the NADPH-dependent reduction of L-glutamate 5-phosphate into L-glutamate 5-semialdehyde and phosphate. The product spontaneously undergoes cyclization to form 1-pyrroline-5-carboxylate. In Sulfurimonas denitrificans (strain ATCC 33889 / DSM 1251) (Thiomicrospira denitrificans (strain ATCC 33889 / DSM 1251)), this protein is Gamma-glutamyl phosphate reductase.